Here is a 107-residue protein sequence, read N- to C-terminus: Integration host factor subunit beta (107 aa).

The segment covering 82 to 101 has biased composition (basic and acidic residues); the sequence is PGKELRERVDRRAGEPLKAE. The tract at residues 82-107 is disordered; it reads PGKELRERVDRRAGEPLKAEDPDDDL.

It belongs to the bacterial histone-like protein family. As to quaternary structure, heterodimer of an alpha and a beta chain.

Functionally, this protein is one of the two subunits of integration host factor, a specific DNA-binding protein that functions in genetic recombination as well as in transcriptional and translational control. The polypeptide is Integration host factor subunit beta (Paraburkholderia xenovorans (strain LB400)).